The sequence spans 459 residues: Transcription factor AP-2-beta (459 aa).

Lysine 21 participates in a covalent cross-link: Glycyl lysine isopeptide (Lys-Gly) (interchain with G-Cter in SUMO). A disordered region spans residues 30 to 139 (HDGVPSHSSR…PQLSGLDPRR (110 aa)). Polar residues predominate over residues 35–51 (SHSSRLSQLGSVSQGPY). A compositionally biased stretch (low complexity) spans 121 to 132 (LLPQPRAALPQL). Position 258 is a phosphoserine; by PKA (serine 258). Residues 299–429 (RRKAANVTLL…YLTEALKGMD (131 aa)) form an H-S-H (helix-span-helix), dimerization region. The interval 435–459 (NTTNRHTSGEGPGSKTGDKEEKHRK) is disordered. Basic and acidic residues predominate over residues 450 to 459 (TGDKEEKHRK).

Belongs to the AP-2 family. Binds DNA as a dimer. Can form homodimers or heterodimers with other AP-2 family members. Interacts with CITED4. Interacts with UBE2I. Interacts with KCTD1; this interaction represses transcription activation. Interacts with CITED2 (via C-terminus); the interaction stimulates TFAP2B-transcriptional activity. Post-translationally, sumoylated. Sumoylated on Lys-21; which inhibits transcriptional activity. In terms of tissue distribution, localizes to neurons in areas of the cerebral cortex, cerebellum and hypothalamus (at protein level).

The protein resides in the nucleus. Its function is as follows. Sequence-specific DNA-binding protein that interacts with inducible viral and cellular enhancer elements to regulate transcription of selected genes. AP-2 factors bind to the consensus sequence 5'-GCCNNNGGC-3' and activate genes involved in a large spectrum of important biological functions including proper eye, face, body wall, limb and neural tube development. They also suppress a number of genes including MCAM/MUC18, C/EBP alpha and MYC. AP-2-beta appears to be required for normal face and limb development and for proper terminal differentiation and function of renal tubular epithelia. In Mus musculus (Mouse), this protein is Transcription factor AP-2-beta (Tfap2b).